A 354-amino-acid chain; its full sequence is Threonine synthase (354 aa).

Position 61 is an N6-(pyridoxal phosphate)lysine (Lys61). Pyridoxal 5'-phosphate contacts are provided by residues Asn87, 187–191 (GNAGN), and Thr316.

It belongs to the threonine synthase family. Requires pyridoxal 5'-phosphate as cofactor.

The enzyme catalyses O-phospho-L-homoserine + H2O = L-threonine + phosphate. It functions in the pathway amino-acid biosynthesis; L-threonine biosynthesis; L-threonine from L-aspartate: step 5/5. Catalyzes the gamma-elimination of phosphate from L-phosphohomoserine and the beta-addition of water to produce L-threonine. This is Threonine synthase (thrC) from Halalkalibacterium halodurans (strain ATCC BAA-125 / DSM 18197 / FERM 7344 / JCM 9153 / C-125) (Bacillus halodurans).